The chain runs to 334 residues: Mucin-15 (334 aa).

A signal peptide spans 1-23 (MLALAKILLISTLFYSLLSGSHG). Residues 24-236 (KENQDINTTQ…SDPQKENRNT (213 aa)) lie on the Extracellular side of the membrane. N-linked (GlcNAc...) asparagine glycosylation is found at Asn-30, Asn-61, Asn-79, Asn-90, Asn-148, Asn-155, Asn-163, Asn-218, and Asn-225. The interval 64-104 (TSNLKASHSPPLNLPNNSHGITDFSSNSSAEHSLGSLKPTS) is disordered. The segment covering 77–94 (LPNNSHGITDFSSNSSAE) has biased composition (polar residues). The helical transmembrane segment at 237-257 (GIVFGAILGAILGVSLLTLVG) threads the bilayer. Residues 258-334 (YLLCGKRKTD…DDIPPLRTSV (77 aa)) lie on the Cytoplasmic side of the membrane. Residues 304 to 334 (PTLNDSAMPESEENARDGIPMDDIPPLRTSV) form a disordered region.

In terms of processing, highly glycosylated (N- and O-linked carbohydrates). Expressed in spleen, thymus, prostate, testis, ovary, small intestine, colon, peripheral blood leukocyte, bone marrow, lymph node and lung.

It is found in the cell membrane. Its subcellular location is the secreted. Its function is as follows. May play a role in the cell adhesion to the extracellular matrix. This chain is Mucin-15 (MUC15), found in Homo sapiens (Human).